Here is a 113-residue protein sequence, read N- to C-terminus: MSTVGELACSYAVMILEDEGIAITSDKIATLVKAAGVEIESYWPMLFAKMAEKRNVTDLIMNVGAGGGGGGAPVSAAAPAAAGGAAAAAPAKEEKKDEPAEESDGDLGFGLFD.

A disordered region spans residues 87 to 113 (AAAPAKEEKKDEPAEESDGDLGFGLFD). Ser-103 is modified (phosphoserine).

It belongs to the eukaryotic ribosomal protein P1/P2 family. P1 and P2 exist as dimers at the large ribosomal subunit.

Plays an important role in the elongation step of protein synthesis. This is Large ribosomal subunit protein P1z (RPP1B) from Arabidopsis thaliana (Mouse-ear cress).